A 357-amino-acid polypeptide reads, in one-letter code: RNA-binding protein 43 (357 aa).

The RRM domain occupies 15–104 (RTVVVAGLPV…VSLRVSHFGD (90 aa)).

In Homo sapiens (Human), this protein is RNA-binding protein 43 (RBM43).